The sequence spans 218 residues: Glycerol-3-phosphate acyltransferase (218 aa).

Helical transmembrane passes span 10–30 (LTLG…FGLI), 60–80 (DLAA…VLLA), 88–108 (PAII…PVWL), 125–145 (SAAW…AFLF), and 165–185 (AFDQ…LIFI).

It belongs to the PlsY family. As to quaternary structure, probably interacts with PlsX.

Its subcellular location is the cell inner membrane. The catalysed reaction is an acyl phosphate + sn-glycerol 3-phosphate = a 1-acyl-sn-glycero-3-phosphate + phosphate. It participates in lipid metabolism; phospholipid metabolism. Its function is as follows. Catalyzes the transfer of an acyl group from acyl-phosphate (acyl-PO(4)) to glycerol-3-phosphate (G3P) to form lysophosphatidic acid (LPA). This enzyme utilizes acyl-phosphate as fatty acyl donor, but not acyl-CoA or acyl-ACP. In Caulobacter vibrioides (strain ATCC 19089 / CIP 103742 / CB 15) (Caulobacter crescentus), this protein is Glycerol-3-phosphate acyltransferase.